Here is a 92-residue protein sequence, read N- to C-terminus: Secreted RxLR effector protein 21 (92 aa).

Positions 1–21 are cleaved as a signal peptide; the sequence is MNLSTLLLTLACISQLHGGSA. The short motif at 30-33 is the RxLR element; it reads RQLR.

It belongs to the RxLR effector family.

It localises to the secreted. It is found in the host nucleus. Its subcellular location is the host cytoplasm. In terms of biological role, secreted effector that completely suppresses the host cell death induced by cell death-inducing proteins. This is Secreted RxLR effector protein 21 from Plasmopara viticola (Downy mildew of grapevine).